The primary structure comprises 142 residues: Alpha-lactalbumin (142 aa).

The N-terminal stretch at 1 to 19 (MMSFVSLLLVGILFHATQA) is a signal peptide. A C-type lysozyme domain is found at 20-142 (EQLTKCEVFQ…KLDQWLCEKL (123 aa)). Cystine bridges form between cysteine 25/cysteine 139, cysteine 47/cysteine 130, cysteine 80/cysteine 96, and cysteine 92/cysteine 110. Asparagine 64 and asparagine 93 each carry an N-linked (GlcNAc...) asparagine glycan. Residues lysine 98, aspartate 101, aspartate 103, aspartate 106, and aspartate 107 each coordinate Ca(2+).

It belongs to the glycosyl hydrolase 22 family. As to quaternary structure, lactose synthase (LS) is a heterodimer of a catalytic component, beta1,4-galactosyltransferase (beta4Gal-T1) and a regulatory component, alpha-lactalbumin (LA). As to expression, mammary gland specific. Secreted in milk.

The protein resides in the secreted. Its function is as follows. Regulatory subunit of lactose synthase, changes the substrate specificity of galactosyltransferase in the mammary gland making glucose a good acceptor substrate for this enzyme. This enables LS to synthesize lactose, the major carbohydrate component of milk. In other tissues, galactosyltransferase transfers galactose onto the N-acetylglucosamine of the oligosaccharide chains in glycoproteins. The chain is Alpha-lactalbumin (LALBA) from Ovis aries (Sheep).